A 339-amino-acid polypeptide reads, in one-letter code: Ketol-acid reductoisomerase (NADP(+)) (339 aa).

The region spanning 1–182 (MKIYYEKDAD…GNTRAGVIET (182 aa)) is the KARI N-terminal Rossmann domain. Residues 24-27 (YGSQ), Ser-51, Ser-53, and 83-86 (DEKQ) each bind NADP(+). His-108 is an active-site residue. Gly-134 is a binding site for NADP(+). In terms of domain architecture, KARI C-terminal knotted spans 183-328 (SFREETETDL…EKLRGMMHWA (146 aa)). Mg(2+) contacts are provided by Asp-191, Glu-195, Glu-227, and Glu-231. Ser-252 is a substrate binding site.

It belongs to the ketol-acid reductoisomerase family. Mg(2+) serves as cofactor.

It catalyses the reaction (2R)-2,3-dihydroxy-3-methylbutanoate + NADP(+) = (2S)-2-acetolactate + NADPH + H(+). The enzyme catalyses (2R,3R)-2,3-dihydroxy-3-methylpentanoate + NADP(+) = (S)-2-ethyl-2-hydroxy-3-oxobutanoate + NADPH + H(+). It functions in the pathway amino-acid biosynthesis; L-isoleucine biosynthesis; L-isoleucine from 2-oxobutanoate: step 2/4. The protein operates within amino-acid biosynthesis; L-valine biosynthesis; L-valine from pyruvate: step 2/4. Involved in the biosynthesis of branched-chain amino acids (BCAA). Catalyzes an alkyl-migration followed by a ketol-acid reduction of (S)-2-acetolactate (S2AL) to yield (R)-2,3-dihydroxy-isovalerate. In the isomerase reaction, S2AL is rearranged via a Mg-dependent methyl migration to produce 3-hydroxy-3-methyl-2-ketobutyrate (HMKB). In the reductase reaction, this 2-ketoacid undergoes a metal-dependent reduction by NADPH to yield (R)-2,3-dihydroxy-isovalerate. The protein is Ketol-acid reductoisomerase (NADP(+)) of Hyphomonas neptunium (strain ATCC 15444).